The primary structure comprises 156 residues: ATP synthase subunit b (156 aa).

The chain crosses the membrane as a helical span at residues 7–29; it reads LIGQLIAFALFTWFCVKFVWPPI.

It belongs to the ATPase B chain family. In terms of assembly, F-type ATPases have 2 components, F(1) - the catalytic core - and F(0) - the membrane proton channel. F(1) has five subunits: alpha(3), beta(3), gamma(1), delta(1), epsilon(1). F(0) has three main subunits: a(1), b(2) and c(10-14). The alpha and beta chains form an alternating ring which encloses part of the gamma chain. F(1) is attached to F(0) by a central stalk formed by the gamma and epsilon chains, while a peripheral stalk is formed by the delta and b chains.

It localises to the cell inner membrane. Its function is as follows. F(1)F(0) ATP synthase produces ATP from ADP in the presence of a proton or sodium gradient. F-type ATPases consist of two structural domains, F(1) containing the extramembraneous catalytic core and F(0) containing the membrane proton channel, linked together by a central stalk and a peripheral stalk. During catalysis, ATP synthesis in the catalytic domain of F(1) is coupled via a rotary mechanism of the central stalk subunits to proton translocation. Component of the F(0) channel, it forms part of the peripheral stalk, linking F(1) to F(0). The chain is ATP synthase subunit b from Mannheimia succiniciproducens (strain KCTC 0769BP / MBEL55E).